The sequence spans 1140 residues: Chromosome partition protein Smc (1140 aa).

34–41 (PNGSGKSN) contributes to the ATP binding site. Residues 160–484 (VDQFDSEIER…EKEASAKIAS (325 aa)) adopt a coiled-coil conformation. The 118-residue stretch at 502 to 619 (EGVIGLVRDL…VQDIDAGRRL (118 aa)) folds into the SMC hinge domain. A coiled-coil region spans residues 660–990 (LEGMKIQLSS…MLNEKKREVF (331 aa)).

Belongs to the SMC family. Homodimer.

The protein resides in the cytoplasm. Functionally, required for chromosome condensation and partitioning. This chain is Chromosome partition protein Smc, found in Thermoplasma acidophilum (strain ATCC 25905 / DSM 1728 / JCM 9062 / NBRC 15155 / AMRC-C165).